Reading from the N-terminus, the 209-residue chain is V-type ATP synthase subunit D 2 (209 aa).

The protein belongs to the V-ATPase D subunit family.

Produces ATP from ADP in the presence of a proton gradient across the membrane. This is V-type ATP synthase subunit D 2 (atpD2) from Treponema pallidum (strain Nichols).